The following is a 1736-amino-acid chain: Collagen alpha-2(XI) chain (1736 aa).

A signal peptide spans Met-1–Ala-27. Positions Asp-57–Cys-228 constitute a Laminin G-like domain. The nonhelical region stretch occupies residues Gln-215–Arg-486. Disordered stretches follow at residues Cys-228–Ser-270, Leu-364–Pro-465, and Leu-485–Ala-1538. Positions Pro-258–Glu-269 are enriched in polar residues. 3 Collagen-like domains span residues Gly-399 to Gly-447, Gly-487 to Ala-545, and Arg-546 to Gly-583. Residues Gly-487–Val-1500 are triple-helical region. Positions Arg-497–Lys-533 are enriched in low complexity. The span at Lys-615 to Pro-624 shows a compositional bias: pro residues. Positions Gln-650 to Pro-668 are enriched in low complexity. Positions Gly-682–Glu-737 constitute a Collagen-like 4 domain. Residues Arg-765–Lys-774 are compositionally biased toward basic and acidic residues. 2 stretches are compositionally biased toward low complexity: residues Arg-776–Met-789 and Pro-842–Lys-861. 5 consecutive Collagen-like domains span residues Gly-868–Pro-924, Gly-967–Ser-1025, Gly-1026–Pro-1055, Ile-1056–Lys-1086, and Gly-1114–Asp-1172. Residues Gly-994–Gly-1003 are compositionally biased toward gly residues. A compositionally biased stretch (pro residues) spans Ile-1029 to Pro-1040. Composition is skewed to low complexity over residues Pro-1115–Pro-1133 and Ile-1155–Ser-1164. The span at Met-1176–Pro-1187 shows a compositional bias: pro residues. Residues Ala-1188–Gln-1197 are compositionally biased toward low complexity. Over residues Gly-1198–Gly-1207 the composition is skewed to gly residues. Residues Glu-1217–Lys-1230 show a composition bias toward low complexity. Over residues Pro-1232–Glu-1241 the composition is skewed to basic and acidic residues. The segment covering Pro-1256–Pro-1272 has biased composition (low complexity). The segment covering Asp-1287–Asp-1296 has biased composition (basic and acidic residues). Low complexity predominate over residues Gln-1376–Ala-1386. 2 stretches are compositionally biased toward pro residues: residues Pro-1388–Leu-1397 and Pro-1457–Ser-1467. Collagen-like domains follow at residues Gly-1393 to Gly-1447 and Ile-1448 to Glu-1499. The span at Pro-1469 to Pro-1481 shows a compositional bias: low complexity. Residues Ile-1501–Gly-1736 constitute a propeptide, C-terminal propeptide. The 195-residue stretch at Glu-1541–Met-1735 folds into the Fibrillar collagen NC1 domain. Residues Cys-1571 and Cys-1603 are joined by a disulfide bond. Residues Asp-1589, Asn-1591, Gln-1592, Cys-1594, and Asp-1597 each contribute to the Ca(2+) site. The N-linked (GlcNAc...) asparagine glycan is linked to Asn-1604. 2 disulfides stabilise this stretch: Cys-1612–Cys-1733 and Cys-1655–Cys-1689.

It belongs to the fibrillar collagen family. As to quaternary structure, trimers composed of three different chains: alpha 1(XI), alpha 2(XI), and alpha 3(XI). Alpha 3(XI) is a post-translational modification of alpha 1(II). Alpha 1(V) can also be found instead of alpha 3(XI)=1(II). In terms of processing, prolines at the third position of the tripeptide repeating unit (G-X-Y) are hydroxylated in some or all of the chains.

It localises to the secreted. The protein resides in the extracellular space. The protein localises to the extracellular matrix. Its function is as follows. May play an important role in fibrillogenesis by controlling lateral growth of collagen II fibrils. This is Collagen alpha-2(XI) chain (Col11a2) from Mus musculus (Mouse).